Consider the following 160-residue polypeptide: MAEKTYPMTLEEKEKLEKELEELKLVRRPEVVERIKIARSYGDLSENSEYEAAKDEQAFVEGQISSLETKIRYAEIVNSDAVAQDEVAIGKTVTIQEIGEDEEEVYIIVGSAGADAFVGKVSNESPIGQALIGKKTGDTATIETPVGSYDVKILKVEKTA.

Residues 1–72 adopt a coiled-coil conformation; that stretch reads MAEKTYPMTL…QISSLETKIR (72 aa).

Belongs to the GreA/GreB family.

Functionally, necessary for efficient RNA polymerase transcription elongation past template-encoded arresting sites. The arresting sites in DNA have the property of trapping a certain fraction of elongating RNA polymerases that pass through, resulting in locked ternary complexes. Cleavage of the nascent transcript by cleavage factors such as GreA or GreB allows the resumption of elongation from the new 3'terminus. GreA releases sequences of 2 to 3 nucleotides. The sequence is that of Transcription elongation factor GreA from Streptococcus pneumoniae serotype 4 (strain ATCC BAA-334 / TIGR4).